We begin with the raw amino-acid sequence, 300 residues long: Ribosomal protein bS6--L-glutamate ligase (300 aa).

The ATP-grasp domain maps to 104 to 287 (MQLLARQGID…IASKMIRWIE (184 aa)). ATP-binding positions include Lys-141, 178–179 (EY), Asp-187, and 211–213 (RSN). The Mg(2+) site is built by Asp-248, Glu-260, and Asn-262. The Mn(2+) site is built by Asp-248, Glu-260, and Asn-262.

It belongs to the RimK family. Mg(2+) serves as cofactor. The cofactor is Mn(2+).

Functionally, an L-glutamate ligase that catalyzes the ATP-dependent post-translational addition of glutamate residues to the C-terminus of ribosomal protein bS6 (RpsF). Is also able to catalyze the synthesis of poly-alpha-glutamate in vitro, via ATP hydrolysis from unprotected glutamate as substrate. The number of glutamate residues added to either RpsF or to poly-alpha-glutamate changes with pH. This is Ribosomal protein bS6--L-glutamate ligase from Escherichia coli O81 (strain ED1a).